A 92-amino-acid chain; its full sequence is UPF0250 protein Smlt4048 (92 aa).

The protein belongs to the UPF0250 family.

The protein is UPF0250 protein Smlt4048 of Stenotrophomonas maltophilia (strain K279a).